Consider the following 69-residue polypeptide: uncharacterized protein (69 aa).

The HTH cro/C1-type domain occupies 5–60 (IREHRKELGLTQEELAERVGVTRQTIIALEKGRYSPSLILAHRIARALGREHIEDI). The segment at residues 16-35 (QEELAERVGVTRQTIIALEK) is a DNA-binding region (H-T-H motif).

This is an uncharacterized protein from Methanothermobacter thermautotrophicus (strain ATCC 29096 / DSM 1053 / JCM 10044 / NBRC 100330 / Delta H) (Methanobacterium thermoautotrophicum).